Consider the following 509-residue polypeptide: 5-hydroxytryptamine receptor (509 aa).

Over 1–99 (MANFTFGDLA…YSHEHLVLTS (99 aa)) the chain is Extracellular. N-linked (GlcNAc...) asparagine glycosylation is found at N3, N47, N58, N68, N72, and N78. Residues 100-122 (VILGLFVLCCIIGNCFVIAAVML) traverse the membrane as a helical segment. Residues 123–132 (ERSLHNVANY) lie on the Cytoplasmic side of the membrane. The chain crosses the membrane as a helical span at residues 133-154 (LILSLAVADLMVAVLVMPLSVV). At 155 to 169 (SEISKVWFLHSEVCD) the chain is on the extracellular side. C168 and C246 are joined by a disulfide. Residues 170-191 (MWISVDVLCCTASILHLVAIAM) form a helical membrane-spanning segment. Residues 192-210 (DRYWAVTSIDYIRRRSARR) lie on the Cytoplasmic side of the membrane. The helical transmembrane segment at 211–233 (ILLMIMVVWIVALFISIPPLFGW) threads the bilayer. Over 234–259 (RDPNNDPDKTGTCIISQDKGYTIFST) the chain is Extracellular. A helical membrane pass occupies residues 260–281 (VGAFYLPMLVMMIIYIRIWLVA). Over 282-432 (RSRIRKDKFQ…LKRERKAART (151 aa)) the chain is Cytoplasmic. The tract at residues 323-372 (SPDSTTEKKKRRAPFKSYGCSPRPERKKNRAKKLPENANGVNSNSSSSER) is disordered. Residues 433-456 (LAIITGAFLICWLPFFIIALIGPF) form a helical membrane-spanning segment. Residues 457–465 (VDPEGIPPF) are Extracellular-facing. A helical transmembrane segment spans residues 466–488 (ARSFVLWLGYFNSLLNPIIYTIF). Over 489–509 (SPEFRSAFQKILFGKYRRGHR) the chain is Cytoplasmic.

Belongs to the G-protein coupled receptor 1 family.

The protein localises to the cell membrane. This is a receptor for 5-hydroxytryptamine (serotonin), a biogenic hormone that function as a neurotransmitter, a hormone, and a mitogen. This chain is 5-hydroxytryptamine receptor, found in Lymnaea stagnalis (Great pond snail).